Consider the following 170-residue polypeptide: Cathelicidin antimicrobial peptide (170 aa).

The N-terminal stretch at 1 to 30 is a signal peptide; it reads MKTQRHGPSLGRWSLVLLLLGLVMPLAIVA. A propeptide spans 31-131 (cathelin-like domain (CLD)); sequence QVLSYQEAVL…DISCDKDNRR (101 aa). Disulfide bonds link C86–C97 and C108–C125. The interval 150–162 is active core; that stretch reads LKKIGQKIKDFWG.

It belongs to the cathelicidin family. Monomer, homodimer or homotrimer (in vitro). Oligomerizes as tetra- or hexamer in solution (in vitro). Proteolytically cleaved by proteinase PRTN3 into antibacterial peptide LL-37. Proteolytically cleaved by cathepsin CTSG and neutrophil elastase ELANE. Post-translationally, resistant to proteolytic degradation in solution, and when bound to both zwitterionic (mimicking mammalian membranes) and negatively charged membranes (mimicking bacterial membranes). In terms of processing, after secretion onto the skin surface, the CAMP gene product is processed by a serine protease-dependent mechanism into multiple novel antimicrobial peptides distinct from and shorter than cathelicidin LL-37. These peptides show enhanced antimicrobial action, acquiring the ability to kill skin pathogens such as S.aureus, E.coli and C.albicans. These peptides have lost the ability to stimulate CXCL8/IL8 release from keratinocytes. The peptides act synergistically, killing bacteria at lower concentrations when present together, and maintain activity at increased salt condition.

The protein localises to the secreted. The protein resides in the vesicle. Functionally, antimicrobial protein that is an integral component of the innate immune system. Binds to bacterial lipopolysaccharides (LPS). Acts via neutrophil N-formyl peptide receptors to enhance the release of CXCL2. Postsecretory processing generates multiple cathelicidin antimicrobial peptides with various lengths which act as a topical antimicrobial defense in sweat on skin. The unprocessed precursor form, cathelicidin antimicrobial peptide, inhibits the growth of Gram-negative E.coli and E.aerogenes with efficiencies comparable to that of the mature peptide LL-37 (in vitro). Its function is as follows. Antimicrobial peptide that is an integral component of the innate immune system. Binds to bacterial lipopolysaccharides (LPS). Causes membrane permeabilization by forming transmembrane pores (in vitro). Causes lysis of E.coli. Exhibits antimicrobial activity against Gram-negative bacteria such as P.aeruginosa, S.typhimurium, E.aerogenes, E.coli and P.syringae, Gram-positive bacteria such as L.monocytogenes, S.epidermidis, S.pyogenes and S.aureus, as well as vancomycin-resistant enterococci (in vitro). Exhibits antimicrobial activity against methicillin-resistant S.aureus, P.mirabilis, and C.albicans in low-salt media, but not in media containing 100 mM NaCl (in vitro). Forms chiral supramolecular assemblies with quinolone signal (PQS) molecules of P.aeruginosa, which may lead to interference of bacterial quorum signaling and perturbance of bacterial biofilm formation. May form supramolecular fiber-like assemblies on bacterial membranes. Induces cytokine and chemokine producation as well as TNF/TNFA and CSF2/GMCSF production in normal human keratinocytes. Exhibits hemolytic activity against red blood cells. In terms of biological role, exhibits antimicrobial activity against E.coli and B.megaterium (in vitro). This is Cathelicidin antimicrobial peptide from Trachypithecus cristatus (Silvered leaf-monkey).